A 498-amino-acid chain; its full sequence is MRINPTTSGPGVSALEEKNQGRIVQIIGPVLDVAFPPGKMPNIYNALVVKGQDTVGQQINVTCEVQQLLGNNRVRAVAMSATDGLMRGMEVIDTGAPLSVPVGGATLGRIFNVLGEPVDNLGPVDTRTTSPIHRSAPAFIQLDTKLSIFETGIKVVDLLAPYRRGGKIGLFGGAGVGKTVLIMELINNIAKAHGGVSVFGGVGERTREGNDLYMEMKESGVINEQNIAESKVALVYGQMNEPPGARMRVGLTALTMAEYFRDVNEQDVLLFIDNIFRFVQAGSEVSALLGRMPSAVGYQPTLSTEMGSLQERITSTKEGSITSIQAVYVPADDLTDPAPATTFAHLDATTVLSRGLAAKGIYPAVDPLDSTSTMLQPRIVGEEHYETAQRVKQTLQRYKELQDIIAILGLDELSEDDRLTVARARKIERFLSQPFFVAEVFTGSPGKYVGLTETIRGFQLILSGELDSLPEQAFYLVGNIDEATAKAMNLDVESKLKK.

172–179 lines the ATP pocket; the sequence is GGAGVGKT.

The protein belongs to the ATPase alpha/beta chains family. As to quaternary structure, F-type ATPases have 2 components, CF(1) - the catalytic core - and CF(0) - the membrane proton channel. CF(1) has five subunits: alpha(3), beta(3), gamma(1), delta(1), epsilon(1). CF(0) has four main subunits: a(1), b(1), b'(1) and c(9-12).

It is found in the plastid. The protein localises to the chloroplast thylakoid membrane. It carries out the reaction ATP + H2O + 4 H(+)(in) = ADP + phosphate + 5 H(+)(out). Its function is as follows. Produces ATP from ADP in the presence of a proton gradient across the membrane. The catalytic sites are hosted primarily by the beta subunits. In Nandina domestica (Heavenly bamboo), this protein is ATP synthase subunit beta, chloroplastic.